Reading from the N-terminus, the 330-residue chain is T-cell surface glycoprotein CD1b4 (330 aa).

An N-terminal signal peptide occupies residues 1 to 15 (MLLLALAFFFPAGDT). At 16-299 (QNVLPGKISF…LYWGHSISIG (284 aa)) the chain is on the extracellular side. 3 N-linked (GlcNAc...) asparagine glycosylation sites follow: Asn35, Asn72, and Asn143. Intrachain disulfides connect Cys117–Cys181 and Cys221–Cys276. The region spanning 182-292 (PRYLMSVIEA…LEGQDIILYW (111 aa)) is the Ig-like domain. A helical transmembrane segment spans residues 300-320 (WIILAVLVPCLIVLVLFILWF). At 321–330 (YRRWSYEDIF) the chain is on the cytoplasmic side. The Internalization signal motif lies at 326 to 329 (YEDI).

Heterodimer with B2M (beta-2-microglobulin). Interacts with saposin C.

The protein resides in the cell membrane. The protein localises to the endosome membrane. It localises to the lysosome membrane. Functionally, antigen-presenting protein that binds self and non-self lipid and glycolipid antigens and presents them to T-cell receptors on natural killer T-cells. The chain is T-cell surface glycoprotein CD1b4 (CD1B4) from Cavia porcellus (Guinea pig).